The following is a 640-amino-acid chain: Threonine--tRNA ligase (640 aa).

The 59-residue stretch at 1 to 59 folds into the TGS domain; it reads MKIKVVLPDGSEREYEKGTKPMEIAREVGIKKVIGAVVDEELWDLKRPLERDCRIRFVT. A catalytic region spans residues 240 to 531; it reads DHRKLGPQLE…LIEHFAGAFP (292 aa). 3 residues coordinate Zn(2+): cysteine 332, histidine 383, and histidine 508.

The protein belongs to the class-II aminoacyl-tRNA synthetase family. In terms of assembly, homodimer. Requires Zn(2+) as cofactor.

Its subcellular location is the cytoplasm. The enzyme catalyses tRNA(Thr) + L-threonine + ATP = L-threonyl-tRNA(Thr) + AMP + diphosphate + H(+). Its function is as follows. Catalyzes the attachment of threonine to tRNA(Thr) in a two-step reaction: L-threonine is first activated by ATP to form Thr-AMP and then transferred to the acceptor end of tRNA(Thr). Also edits incorrectly charged L-seryl-tRNA(Thr). The polypeptide is Threonine--tRNA ligase (Thermotoga neapolitana (strain ATCC 49049 / DSM 4359 / NBRC 107923 / NS-E)).